A 548-amino-acid chain; its full sequence is Probable malate:quinone oxidoreductase (548 aa).

Positions 521 to 548 (DKPQAADSTPKPQLKPQPVQKEVADIAL) are disordered. Low complexity predominate over residues 530-541 (PKPQLKPQPVQK).

The protein belongs to the MQO family. It depends on FAD as a cofactor.

It carries out the reaction (S)-malate + a quinone = a quinol + oxaloacetate. The protein operates within carbohydrate metabolism; tricarboxylic acid cycle; oxaloacetate from (S)-malate (quinone route): step 1/1. The chain is Probable malate:quinone oxidoreductase from Escherichia coli (strain UTI89 / UPEC).